A 140-amino-acid polypeptide reads, in one-letter code: Nucleoside diphosphate kinase (140 aa).

Positions 11, 59, 87, 93, 104, and 114 each coordinate ATP. The active-site Pros-phosphohistidine intermediate is His117.

It belongs to the NDK family. Homotetramer. Requires Mg(2+) as cofactor.

The protein resides in the cytoplasm. The enzyme catalyses a 2'-deoxyribonucleoside 5'-diphosphate + ATP = a 2'-deoxyribonucleoside 5'-triphosphate + ADP. The catalysed reaction is a ribonucleoside 5'-diphosphate + ATP = a ribonucleoside 5'-triphosphate + ADP. Its function is as follows. Major role in the synthesis of nucleoside triphosphates other than ATP. The ATP gamma phosphate is transferred to the NDP beta phosphate via a ping-pong mechanism, using a phosphorylated active-site intermediate. This is Nucleoside diphosphate kinase from Bartonella tribocorum (strain CIP 105476 / IBS 506).